A 119-amino-acid chain; its full sequence is Large ribosomal subunit protein bL20 (119 aa).

This sequence belongs to the bacterial ribosomal protein bL20 family.

Functionally, binds directly to 23S ribosomal RNA and is necessary for the in vitro assembly process of the 50S ribosomal subunit. It is not involved in the protein synthesizing functions of that subunit. This chain is Large ribosomal subunit protein bL20, found in Nitrosomonas eutropha (strain DSM 101675 / C91 / Nm57).